A 249-amino-acid chain; its full sequence is DNA polymerase sliding clamp (249 aa).

It belongs to the PCNA family. As to quaternary structure, homotrimer. The subunits circularize to form a toroid; DNA passes through its center. Replication factor C (RFC) is required to load the toroid on the DNA.

Its function is as follows. Sliding clamp subunit that acts as a moving platform for DNA processing. Responsible for tethering the catalytic subunit of DNA polymerase and other proteins to DNA during high-speed replication. The sequence is that of DNA polymerase sliding clamp from Thermococcus gammatolerans (strain DSM 15229 / JCM 11827 / EJ3).